Reading from the N-terminus, the 195-residue chain is Myosin regulatory light chain, striated muscle, 25 kDa isoform (195 aa).

Positions 1 to 17 (AKDKEKKEKKDKKKDDA) are enriched in basic and acidic residues. The disordered stretch occupies residues 1–39 (AKDKEKKEKKDKKKDDAPAEEAPAAAAAPAEEAAPTPSA). The span at 20–39 (EEAPAAAAAPAEEAAPTPSA) shows a compositional bias: low complexity. 2 consecutive EF-hand domains span residues 55–90 (NQIQ…IGRE) and 124–159 (DTEG…VGDQ). Ca(2+)-binding residues include aspartate 68, aspartate 70, aspartate 72, and aspartate 79.

In terms of assembly, myosin is a hexamer of 2 heavy chains and 4 light chains.

In terms of biological role, plays an important role in regulation of muscle cell contractile activity. This is Myosin regulatory light chain, striated muscle, 25 kDa isoform from Lumbricus terrestris (Common earthworm).